Reading from the N-terminus, the 103-residue chain is Protein translation factor SUI1 homolog (103 aa).

This sequence belongs to the SUI1 family.

The polypeptide is Protein translation factor SUI1 homolog (Methanocaldococcus jannaschii (strain ATCC 43067 / DSM 2661 / JAL-1 / JCM 10045 / NBRC 100440) (Methanococcus jannaschii)).